The following is a 437-amino-acid chain: Cytochrome b (437 aa).

A helical transmembrane segment spans residues 45-65 (WIWGIVLAFTLVLQIVTGIVL). Residues H97 and H111 each contribute to the heme b site. The next 9 membrane-spanning stretches (helical) occupy residues 100–120 (GASL…YYGS), 129–149 (WIVG…GYVL), 156–176 (FWGA…GPSI), 194–214 (FFSL…IHIW), 248–268 (FVIK…AVVA), 298–318 (FLPF…VILV), 330–350 (FFGV…PWLD), 365–385 (MWFW…AMPT), and 391–411 (WISL…LPLL). Heme b-binding residues include H198 and H212.

Belongs to the cytochrome b family. The main subunits of complex b-c1 are: cytochrome b, cytochrome c1 and the Rieske protein. The cofactor is heme b.

The protein localises to the cell membrane. Component of the ubiquinol-cytochrome c reductase complex (complex III or cytochrome b-c1 complex), which is a respiratory chain that generates an electrochemical potential coupled to ATP synthesis. The protein is Cytochrome b (petB) of Rhodobacter capsulatus (strain ATCC BAA-309 / NBRC 16581 / SB1003).